Here is a 328-residue protein sequence, read N- to C-terminus: 4-hydroxythreonine-4-phosphate dehydrogenase (328 aa).

Positions 134 and 135 each coordinate substrate. A divalent metal cation contacts are provided by H164, H209, and H264. Substrate-binding residues include K272, N281, and R290.

This sequence belongs to the PdxA family. As to quaternary structure, homodimer. Requires Zn(2+) as cofactor. The cofactor is Mg(2+). Co(2+) is required as a cofactor.

It is found in the cytoplasm. It carries out the reaction 4-(phosphooxy)-L-threonine + NAD(+) = 3-amino-2-oxopropyl phosphate + CO2 + NADH. It participates in cofactor biosynthesis; pyridoxine 5'-phosphate biosynthesis; pyridoxine 5'-phosphate from D-erythrose 4-phosphate: step 4/5. In terms of biological role, catalyzes the NAD(P)-dependent oxidation of 4-(phosphooxy)-L-threonine (HTP) into 2-amino-3-oxo-4-(phosphooxy)butyric acid which spontaneously decarboxylates to form 3-amino-2-oxopropyl phosphate (AHAP). This is 4-hydroxythreonine-4-phosphate dehydrogenase from Shewanella denitrificans (strain OS217 / ATCC BAA-1090 / DSM 15013).